A 278-amino-acid chain; its full sequence is Envelope glycoprotein L (278 aa).

Residues 1–30 form the signal peptide; that stretch reads MCRRPDCGFSFSPGPVILLWCCLLLPIVSS. One can recognise a gL betaherpesvirus-type domain in the interval 43–256; that stretch reads VPAECPELTR…DKYYAGLPPE (214 aa). Cys-154 and Cys-159 are oxidised to a cystine.

It belongs to the herpesviridae glycoprotein L (gL) family. Betaherpesvirinae gL subfamily. In terms of assembly, interacts with glycoprotein H (gH); this interaction is necessary for the correct processing and cell surface expression of gH. Forms the envelope pentamer complex (PC) composed of gH, gL, UL128, UL130, and UL131A. The pentamer interacts with host NRP2. Forms the envelope trimer complex composed of gH, gL, and gO. The trimer interacts with host PDGFRA. The trimer also interacts with host EPHA2.

Its subcellular location is the virion membrane. The protein localises to the host cell membrane. It localises to the host Golgi apparatus. The protein resides in the host trans-Golgi network. Its function is as follows. The heterodimer glycoprotein H-glycoprotein L is required for the fusion of viral and plasma membranes leading to virus entry into the host cell. Acts as a functional inhibitor of gH and maintains gH in an inhibited form. Upon binding to host integrins, gL dissociates from gH leading to activation of the viral fusion glycoproteins gB and gH. In human cytomegalovirus, forms two distincts complexes to mediate viral entry, a trimer and a pentamer at the surface of the virion envelope. The gH-gL-gO trimer is required for infection in fibroblasts by interacting with host PDGFRA, and in glioblastoma cells by interacting with host EPHA2. The gH-gL-UL128-UL130-UL131A pentamer is essential for viral entry in epithelial, endothelial and myeloid cells via interaction with host NRP2. The chain is Envelope glycoprotein L from Homo sapiens (Human).